The chain runs to 312 residues: Olfactory receptor 2L3 (312 aa).

Residues 1–24 (MENYNQTSTDFILLGFFPPSRIGL) lie on the Extracellular side of the membrane. Asn-5 carries an N-linked (GlcNAc...) asparagine glycan. A helical membrane pass occupies residues 25-48 (FLFILIVFIFLMALIGNLSMILLI). The Cytoplasmic segment spans residues 49–56 (FLDTHLHT). The helical transmembrane segment at 57-78 (PMYFLLSQLSLIDLNYISTIVP) threads the bilayer. Over 79-99 (KMASDFLSGNKSISFTGCGIQ) the chain is Extracellular. Residue Asn-88 is glycosylated (N-linked (GlcNAc...) asparagine). Cys-96 and Cys-188 are disulfide-bonded. A helical membrane pass occupies residues 100 to 119 (SFFFSALGGAEALLLASMAY). Residues 120–138 (DRYIAICFPLHYPIRMSKR) are Cytoplasmic-facing. A helical transmembrane segment spans residues 139–157 (MCVLMITGSWIIGSINACA). Residues 158-194 (HTVYVLHIPYCQSRAINHFFCDVPAMVTLACMDTWVY) lie on the Extracellular side of the membrane. Residues 195–218 (EGTVFLSTTIFLVFPFIAISCSYG) traverse the membrane as a helical segment. Topologically, residues 219-235 (RVLLAVYHMKSAEGRKK) are cytoplasmic. A helical membrane pass occupies residues 236-258 (AYLTCSTHLTVVTFYYAPFVYTY). At 259-271 (LRPRSLRSPTEDK) the chain is on the extracellular side. The chain crosses the membrane as a helical span at residues 272 to 291 (VLAVFYTTLTPMLNPIIYSL). At 292–312 (RNKEVMGALTRVSQRICSGKM) the chain is on the cytoplasmic side.

This sequence belongs to the G-protein coupled receptor 1 family.

The protein resides in the cell membrane. In terms of biological role, odorant receptor. The protein is Olfactory receptor 2L3 (OR2L3) of Homo sapiens (Human).